Consider the following 398-residue polypeptide: O-methyltransferase hmp5 (398 aa).

S-adenosyl-L-methionine contacts are provided by residues 233–234 (GG), Glu-261, and 283–284 (DF). The active-site Proton acceptor is His-303.

The protein belongs to the class I-like SAM-binding methyltransferase superfamily. Cation-independent O-methyltransferase family.

The protein operates within secondary metabolite biosynthesis. In terms of biological role, O-methyltransferase; part of the gene cluster that mediates the biosynthesis of hypothemycin, a resorcylic acid lactone (RAL) that irreversibly inhibits a subset of protein kinases with a conserved cysteine in the ATP binding site such as human ERK2. The first step is performed by both PKSs hmp3 and hmp8 and leads to the production of 7',8'-dehydrozearalenol (DHZ). The highly reducing PKS hpm8 synthesizes the reduced hexaketide (7S,11S,2E,8E)-7,11-dihydroxy-dodeca-2,8-dienoate, which is transferred downstream to the non-reducing PKS hpm3. Hpm3 then extends the reduced hexaketide to a nonaketide, after which regioselective cyclization and macrolactonization affords DHZ. The next step is the conversion of DHZ into aigialomycin C and is performed by the O-methyltransferase hmp5, the FAD-binding monooxygenase hmp7, and the cytochrome P450 monooxygenase hmp1. The wide substrate tolerance of the hmp5 and hmp7 implies that the reactions from DHZ to aigialomycin C can occur in any order. The steps from aigialomycin C to hypothemycin are less well established. The FAD-linked oxidoreductase hmp9 presumably catalyzes oxidation of the C-6' hydroxyl to a ketone. The timing of this oxidation is important, since the resulting enone functional group is a Michael acceptor that can react spontaneously with glutathione, an abundant metabolite in fungal cells. The glutathione S-transferase hmp2 catalyzes cis-trans isomerization of the 7',8' double bond with equilibrium favoring the trans isomer. The hpm6-encoded transporter might preferentially pump hypothemycin out of the cell relative to the trans isomer aigialomycin A. The cis-to-trans isomerization may be coupled with C-4' hydroxylation, since all known hypothemycin analogs containing the enone functional group also have hydroxyl groups at both C-4' and C-5'. This is O-methyltransferase hmp5 from Hypomyces subiculosus (Nectria subiculosa).